A 411-amino-acid polypeptide reads, in one-letter code: Lissencephaly-1 homolog (411 aa).

The LisH domain maps to Q9–T41. The stretch at T56 to A83 forms a coiled coil. WD repeat units follow at residues G106–K147, G148–K187, G191–T230, G233–E272, D275–T334, G337–T376, and A379–R411.

It belongs to the WD repeat LIS1/nudF family.

The protein localises to the cytoplasm. Its subcellular location is the cytoskeleton. It localises to the microtubule organizing center. It is found in the centrosome. Positively regulates the activity of the minus-end directed microtubule motor protein dynein. May enhance dynein-mediated microtubule sliding by targeting dynein to the microtubule plus end. Required for several dynein- and microtubule-dependent processes. The polypeptide is Lissencephaly-1 homolog (Drosophila yakuba (Fruit fly)).